We begin with the raw amino-acid sequence, 432 residues long: 3-phosphoshikimate 1-carboxyvinyltransferase (432 aa).

Residues Lys23, Ser24, and Arg28 each contribute to the 3-phosphoshikimate site. A phosphoenolpyruvate-binding site is contributed by Lys23. Phosphoenolpyruvate is bound by residues Gly95 and Arg123. Positions 167, 169, 317, and 344 each coordinate 3-phosphoshikimate. Gln169 contacts phosphoenolpyruvate. Catalysis depends on Asp317, which acts as the Proton acceptor. Arg348 and Arg390 together coordinate phosphoenolpyruvate.

It belongs to the EPSP synthase family. Monomer.

The protein resides in the cytoplasm. It catalyses the reaction 3-phosphoshikimate + phosphoenolpyruvate = 5-O-(1-carboxyvinyl)-3-phosphoshikimate + phosphate. The protein operates within metabolic intermediate biosynthesis; chorismate biosynthesis; chorismate from D-erythrose 4-phosphate and phosphoenolpyruvate: step 6/7. Catalyzes the transfer of the enolpyruvyl moiety of phosphoenolpyruvate (PEP) to the 5-hydroxyl of shikimate-3-phosphate (S3P) to produce enolpyruvyl shikimate-3-phosphate and inorganic phosphate. This Staphylococcus saprophyticus subsp. saprophyticus (strain ATCC 15305 / DSM 20229 / NCIMB 8711 / NCTC 7292 / S-41) protein is 3-phosphoshikimate 1-carboxyvinyltransferase.